The sequence spans 346 residues: Nitrilase 1 (346 aa).

Residue Ser-2 is modified to N-acetylserine. The 273-residue stretch at 25-297 (VRVTIVQSST…EGLVTADIDL (273 aa)) folds into the CN hydrolase domain. Glu-65 (proton acceptor) is an active-site residue. Lys-152 acts as the Proton donor in catalysis. Cys-186 serves as the catalytic Nucleophile.

Belongs to the carbon-nitrogen hydrolase superfamily. Nitrilase family. As to quaternary structure, interacts with DEK3. Expressed in cotyledons, hypocotyls, leaves, roots, stems, flowers and siliques.

It carries out the reaction a nitrile + 2 H2O = a carboxylate + NH4(+). Can convert indole-3-acetonitrile to the plant hormone indole-3-acetic acid. This is Nitrilase 1 from Arabidopsis thaliana (Mouse-ear cress).